Consider the following 353-residue polypeptide: tRNA N(3)-cytidine methyltransferase METTL2 (353 aa).

The disordered stretch occupies residues 1 to 37 (MAAPVVAADSPVIENMPETAGGATENSAEAQKRPQFG). S-adenosyl-L-methionine contacts are provided by tryptophan 93, tyrosine 97, glycine 165, aspartate 190, aspartate 216, and isoleucine 237.

This sequence belongs to the methyltransferase superfamily. METL family. In terms of assembly, monomer.

It is found in the cytoplasm. It catalyses the reaction cytidine(32) in tRNA(Thr) + S-adenosyl-L-methionine = N(3)-methylcytidine(32) in tRNA(Thr) + S-adenosyl-L-homocysteine + H(+). The enzyme catalyses cytidine(32) in tRNA(Arg)(CCU) + S-adenosyl-L-methionine = N(3)-methylcytidine(32) in tRNA(Arg)(CCU) + S-adenosyl-L-homocysteine + H(+). Its function is as follows. S-adenosyl-L-methionine-dependent methyltransferase that mediates N(3)-methylcytidine modification of residue 32 of the tRNA anticodon loop of tRNA(Thr)(UGU) and tRNA(Arg)(CCU). N(3)-methylcytidine methylation by mettl2a requires the N6-threonylcarbamoylation of tRNA (t6A37) by the EKC/KEOPS complex as prerequisite. In Danio rerio (Zebrafish), this protein is tRNA N(3)-cytidine methyltransferase METTL2 (mettl2a).